Reading from the N-terminus, the 311-residue chain is MGKENCTTVAEFILLGLSDVPELRVCLFLLFLLIYGVTLLANLGMTALIQVSSRLHTPVYFFLSHLSFVDFCYSSIIVPKMLANIFNKDKAISFLGCMVQFYLFCTCGVTEVFLLAVMAYDRFVAICNPLLYMVTMSQKLRVELTSCCYFCGTVCSLIHSSLALRILFYRSNVINHFFCDLPPLLSLACSDVTVNETLLFLVATLNESVTIMIILTSYLLILTTILKIHSAESRHKAFSTCASHLTAITVSHGTILYIYCRPSSGNSGDVDKVATVFYTVVIPMLNPLIYSLRNKDVNKALRKVMGSKIHS.

Residues 1 to 25 (MGKENCTTVAEFILLGLSDVPELRV) lie on the Extracellular side of the membrane. An N-linked (GlcNAc...) asparagine glycan is attached at Asn5. The helical transmembrane segment at 26–46 (CLFLLFLLIYGVTLLANLGMT) threads the bilayer. Over 47–54 (ALIQVSSR) the chain is Cytoplasmic. A helical membrane pass occupies residues 55–75 (LHTPVYFFLSHLSFVDFCYSS). The Extracellular portion of the chain corresponds to 76–99 (IIVPKMLANIFNKDKAISFLGCMV). Cysteines 97 and 189 form a disulfide. The helical transmembrane segment at 100-120 (QFYLFCTCGVTEVFLLAVMAY) threads the bilayer. The Cytoplasmic portion of the chain corresponds to 121–139 (DRFVAICNPLLYMVTMSQK). Residues 140–160 (LRVELTSCCYFCGTVCSLIHS) traverse the membrane as a helical segment. Over 161–196 (SLALRILFYRSNVINHFFCDLPPLLSLACSDVTVNE) the chain is Extracellular. An N-linked (GlcNAc...) asparagine glycan is attached at Asn195. A helical transmembrane segment spans residues 197–217 (TLLFLVATLNESVTIMIILTS). The Cytoplasmic segment spans residues 218-237 (YLLILTTILKIHSAESRHKA). The helical transmembrane segment at 238–258 (FSTCASHLTAITVSHGTILYI) threads the bilayer. At 259-271 (YCRPSSGNSGDVD) the chain is on the extracellular side. Residues 272–292 (KVATVFYTVVIPMLNPLIYSL) form a helical membrane-spanning segment. Residues 293-311 (RNKDVNKALRKVMGSKIHS) are Cytoplasmic-facing.

The protein belongs to the G-protein coupled receptor 1 family.

The protein resides in the cell membrane. Its function is as follows. Odorant receptor. This chain is Olfactory receptor 5L2 (OR5L2), found in Homo sapiens (Human).